The sequence spans 252 residues: MSVQRYFIYLAYDGTHYHGWQIQPNGISIQECLMKALATFLRKDTEVIGAGRTDAGVHASLMVAHFDYEGEPLDVDKVAEKLNRLLPQDISVYKVCRVKPDAHARFDATARTYKYYITTVKFPFNRQYRYRIHNPLDFQKMNEAALTLFHYSDFTSFSKLHTDVKTNICKIMHAEWTQEDEYTWVFTIQADRFLRNMVRAIVGTLLEVGRGKLSVDDFRKIIEQQNRCKAGTSAPGNALFLVNVEYPQEIFE.

The active-site Nucleophile is the D54. Position 113 (Y113) interacts with substrate.

Belongs to the tRNA pseudouridine synthase TruA family. In terms of assembly, homodimer.

The enzyme catalyses uridine(38/39/40) in tRNA = pseudouridine(38/39/40) in tRNA. Formation of pseudouridine at positions 38, 39 and 40 in the anticodon stem and loop of transfer RNAs. This Bacteroides fragilis (strain ATCC 25285 / DSM 2151 / CCUG 4856 / JCM 11019 / LMG 10263 / NCTC 9343 / Onslow / VPI 2553 / EN-2) protein is tRNA pseudouridine synthase A.